A 545-amino-acid chain; its full sequence is Chaperonin GroEL 1 (545 aa).

ATP-binding positions include 30–33 (TLGP), lysine 51, 87–91 (DGTTT), glycine 415, and aspartate 495.

This sequence belongs to the chaperonin (HSP60) family. In terms of assembly, forms a cylinder of 14 subunits composed of two heptameric rings stacked back-to-back. Interacts with the co-chaperonin GroES.

The protein resides in the cytoplasm. The catalysed reaction is ATP + H2O + a folded polypeptide = ADP + phosphate + an unfolded polypeptide.. Functionally, together with its co-chaperonin GroES, plays an essential role in assisting protein folding. The GroEL-GroES system forms a nano-cage that allows encapsulation of the non-native substrate proteins and provides a physical environment optimized to promote and accelerate protein folding. This is Chaperonin GroEL 1 from Sinorhizobium medicae (strain WSM419) (Ensifer medicae).